Here is a 144-residue protein sequence, read N- to C-terminus: Flagellar assembly factor FliW (144 aa).

The protein belongs to the FliW family. As to quaternary structure, monomer. One copy interacts with the each alpha-helical wing of the CsrA homodimer, yielding a FliW-CsrA(2)-FliW complex. Comparison with a CsrA-mRNA structure (2JPP) suggests CsrA cannot bind both mRNA and FliW at the same time. Interacts with flagellin.

It is found in the cytoplasm. Its function is as follows. Acts as an anti-CsrA protein, binds CsrA and prevents it from repressing translation of its target genes, one of which is flagellin. Binds to flagellin and participates in the assembly of the flagellum. Allosterically inhibits CsrA binding to mRNA in a non-competitive fashion by preventing CsrA binding to the 5'-UTR. In Geobacillus thermodenitrificans (strain NG80-2), this protein is Flagellar assembly factor FliW.